The chain runs to 254 residues: MGRKVAVLWHASFSIGAGVLYFYFVLPRWPELMGDTGHSLGTGLRIATGALVGLAALPVVFTLLRTRKPELGTPQLALSMRIWSIMAHVLAGALIVGTAISEVWLSLDAAGQWLFGIYGAAAAIAVLGFFGFYLSFVAELPPPPPKPLKPKKPKQRRLRRKKTAKGDEAEPEAAEEAENTELAAQEDEEAVEAPPESIESPGGEPESATREAPAAETATAEEPRGGLRNRRPTGKTSHRRRRTRSGVQVAKVDE.

4 consecutive transmembrane segments (helical) span residues 5–25 (VAVLWHASFSIGAGVLYFYFV), 44–64 (LRIATGALVGLAALPVVFTLL), 85–105 (IMAHVLAGALIVGTAISEVWL), and 114–134 (LFGIYGAAAAIAVLGFFGFYL). The tract at residues 143–254 (PPPKPLKPKK…SGVQVAKVDE (112 aa)) is disordered. The segment covering 148 to 163 (LKPKKPKQRRLRRKKT) has biased composition (basic residues). Residues 169-191 (AEPEAAEEAENTELAAQEDEEAV) show a composition bias toward acidic residues. A compositionally biased stretch (low complexity) spans 192–220 (EAPPESIESPGGEPESATREAPAAETATA). Residues 227–244 (LRNRRPTGKTSHRRRRTR) show a composition bias toward basic residues.

Interacts with the Mce1 and Mce4 accessory subunits Rv0199/OmamA, Rv0177/Mam1C and Rv3492c/Mam4B.

The protein resides in the cell membrane. Its function is as follows. Required for the import of both fatty acids and cholesterol during growth in macrophages and in axenic culture. Facilitates the uptake of these lipids by stabilizing protein subunits of the Mce1 and Mce4 multi-subunit transporters, which transport fatty acids and cholesterol, respectively. Required for full virulence in vivo. This Mycobacterium tuberculosis (strain ATCC 25618 / H37Rv) protein is Lipid uptake coordinator A.